The chain runs to 325 residues: Glutarate 2-hydroxylase (325 aa).

Residues His160, Asp162, and His292 each contribute to the Fe cation site.

It belongs to the glutarate hydroxylase family. In terms of assembly, homotetramer. Requires Fe(2+) as cofactor.

The enzyme catalyses glutarate + 2-oxoglutarate + O2 = (S)-2-hydroxyglutarate + succinate + CO2. It functions in the pathway amino-acid degradation. In terms of biological role, acts as an alpha-ketoglutarate-dependent dioxygenase catalyzing hydroxylation of glutarate (GA) to L-2-hydroxyglutarate (L2HG). Functions in a L-lysine degradation pathway that proceeds via cadaverine, glutarate and L-2-hydroxyglutarate. In Escherichia coli (strain UTI89 / UPEC), this protein is Glutarate 2-hydroxylase.